The chain runs to 583 residues: ATP-dependent lipid A-core flippase (583 aa).

The next 5 helical transmembrane spans lie at 27 to 47 (LAVAVVALIINAVSDTYMVSL), 69 to 89 (LLVFGLMFIRGISSFVSTYCL), 142 to 162 (ALVSIVREGTSIIGLLVLMFY), 165 to 185 (WQLSLVLILVAPVVAWAIGFV), and 249 to 269 (AAANPIIQMIASIAIVVVLYL). An ABC transmembrane type-1 domain is found at 28–310 (AVAVVALIIN…LTNVTSQFQR (283 aa)). An ABC transporter domain is found at 342-578 (VNVKDISFTY…DGAYAQLHRI (237 aa)). 376–383 (GRSGSGKS) lines the ATP pocket.

It belongs to the ABC transporter superfamily. Lipid exporter (TC 3.A.1.106) family. In terms of assembly, homodimer.

It is found in the cell inner membrane. The catalysed reaction is ATP + H2O + lipid A-core oligosaccharideSide 1 = ADP + phosphate + lipid A-core oligosaccharideSide 2.. Functionally, involved in lipopolysaccharide (LPS) biosynthesis. Translocates lipid A-core from the inner to the outer leaflet of the inner membrane. Transmembrane domains (TMD) form a pore in the inner membrane and the ATP-binding domain (NBD) is responsible for energy generation. The chain is ATP-dependent lipid A-core flippase from Vibrio vulnificus (strain CMCP6).